The following is a 165-amino-acid chain: Transcriptional repressor NrdR (165 aa).

A zinc finger spans residues C3–C34. The ATP-cone domain occupies L46–D136.

The protein belongs to the NrdR family. It depends on Zn(2+) as a cofactor.

Negatively regulates transcription of bacterial ribonucleotide reductase nrd genes and operons by binding to NrdR-boxes. This Arthrobacter sp. (strain FB24) protein is Transcriptional repressor NrdR.